The primary structure comprises 315 residues: Mitochondrial glutamate carrier 2 (315 aa).

Solcar repeat units lie at residues 6–92, 100–210, and 219–308; these read LSIT…FRRL, RNLK…LNNL, and ASFA…GIGE. Helical transmembrane passes span 12-32, 61-81, and 106-126; these read LING…IDLA, FFGM…EKAI, and MLAG…MEML. The interval 141-160 is disordered; the sequence is QGSASAPSTSRSYTTGSAST. The segment covering 142–159 has biased composition (polar residues); it reads GSASAPSTSRSYTTGSAS. A Phosphoserine modification is found at Ser-145. 3 helical membrane passes run 185-205, 225-245, and 288-308; these read GLGA…PLFA, FVSG…LDVL, and ALVI…GIGE.

The protein belongs to the mitochondrial carrier (TC 2.A.29) family. As to expression, expressed in brain, to a lesser extent in testis, and poorly in all the other tissues.

It localises to the mitochondrion inner membrane. The enzyme catalyses L-glutamate(in) + H(+)(in) = L-glutamate(out) + H(+)(out). Responsible for the transport of glutamate from the cytosol into the mitochondrial matrix with the concomitant import of a proton (symport system). The chain is Mitochondrial glutamate carrier 2 from Homo sapiens (Human).